A 340-amino-acid polypeptide reads, in one-letter code: Phosphate acyltransferase (340 aa).

Belongs to the PlsX family. Homodimer. Probably interacts with PlsY.

It is found in the cytoplasm. The catalysed reaction is a fatty acyl-[ACP] + phosphate = an acyl phosphate + holo-[ACP]. The protein operates within lipid metabolism; phospholipid metabolism. Catalyzes the reversible formation of acyl-phosphate (acyl-PO(4)) from acyl-[acyl-carrier-protein] (acyl-ACP). This enzyme utilizes acyl-ACP as fatty acyl donor, but not acyl-CoA. This Clostridioides difficile (strain 630) (Peptoclostridium difficile) protein is Phosphate acyltransferase.